A 469-amino-acid chain; its full sequence is Aspartyl/glutamyl-tRNA(Asn/Gln) amidotransferase subunit B (469 aa).

This sequence belongs to the GatB/GatE family. GatB subfamily. In terms of assembly, heterotrimer of A, B and C subunits.

It carries out the reaction L-glutamyl-tRNA(Gln) + L-glutamine + ATP + H2O = L-glutaminyl-tRNA(Gln) + L-glutamate + ADP + phosphate + H(+). The catalysed reaction is L-aspartyl-tRNA(Asn) + L-glutamine + ATP + H2O = L-asparaginyl-tRNA(Asn) + L-glutamate + ADP + phosphate + 2 H(+). Its function is as follows. Allows the formation of correctly charged Asn-tRNA(Asn) or Gln-tRNA(Gln) through the transamidation of misacylated Asp-tRNA(Asn) or Glu-tRNA(Gln) in organisms which lack either or both of asparaginyl-tRNA or glutaminyl-tRNA synthetases. The reaction takes place in the presence of glutamine and ATP through an activated phospho-Asp-tRNA(Asn) or phospho-Glu-tRNA(Gln). The polypeptide is Aspartyl/glutamyl-tRNA(Asn/Gln) amidotransferase subunit B (Thermus thermophilus (strain ATCC 27634 / DSM 579 / HB8)).